The chain runs to 136 residues: Large ribosomal subunit protein bL17 (136 aa).

Belongs to the bacterial ribosomal protein bL17 family. In terms of assembly, part of the 50S ribosomal subunit. Contacts protein L32.

The chain is Large ribosomal subunit protein bL17 from Rickettsia conorii (strain ATCC VR-613 / Malish 7).